Reading from the N-terminus, the 284-residue chain is D-tagatose-1,6-bisphosphate aldolase subunit GatY (284 aa).

Aspartate 82 acts as the Proton donor in catalysis. Residues histidine 83 and histidine 180 each coordinate Zn(2+). Position 181 (glycine 181) interacts with dihydroxyacetone phosphate. Residue histidine 208 coordinates Zn(2+). Dihydroxyacetone phosphate-binding positions include 209–211 (GAS) and 230–233 (NVAT).

It belongs to the class II fructose-bisphosphate aldolase family. TagBP aldolase GatY subfamily. In terms of assembly, forms a complex with GatZ. Zn(2+) serves as cofactor.

The catalysed reaction is D-tagatofuranose 1,6-bisphosphate = D-glyceraldehyde 3-phosphate + dihydroxyacetone phosphate. It participates in carbohydrate metabolism; D-tagatose 6-phosphate degradation; D-glyceraldehyde 3-phosphate and glycerone phosphate from D-tagatose 6-phosphate: step 2/2. Functionally, catalytic subunit of the tagatose-1,6-bisphosphate aldolase GatYZ, which catalyzes the reversible aldol condensation of dihydroxyacetone phosphate (DHAP or glycerone-phosphate) with glyceraldehyde 3-phosphate (G3P) to produce tagatose 1,6-bisphosphate (TBP). Requires GatZ subunit for full activity and stability. Is involved in the catabolism of galactitol. The chain is D-tagatose-1,6-bisphosphate aldolase subunit GatY from Salmonella newport (strain SL254).